Consider the following 444-residue polypeptide: Tubulin beta-2 chain (444 aa).

Positions 11, 69, 138, 142, 143, 144, 204, and 226 each coordinate GTP. Glu69 contributes to the Mg(2+) binding site. The tract at residues 422–444 (YQQYQDATAEEDDYDDGEGSTGD) is disordered. Residues 429–444 (TAEEDDYDDGEGSTGD) show a composition bias toward acidic residues.

Belongs to the tubulin family. Dimer of alpha and beta chains. A typical microtubule is a hollow water-filled tube with an outer diameter of 25 nm and an inner diameter of 15 nM. Alpha-beta heterodimers associate head-to-tail to form protofilaments running lengthwise along the microtubule wall with the beta-tubulin subunit facing the microtubule plus end conferring a structural polarity. Microtubules usually have 13 protofilaments but different protofilament numbers can be found in some organisms and specialized cells. The cofactor is Mg(2+). As to expression, found in areas of rapidly dividing tissues.

Its subcellular location is the cytoplasm. The protein localises to the cytoskeleton. In terms of biological role, tubulin is the major constituent of microtubules, a cylinder consisting of laterally associated linear protofilaments composed of alpha- and beta-tubulin heterodimers. Microtubules grow by the addition of GTP-tubulin dimers to the microtubule end, where a stabilizing cap forms. Below the cap, tubulin dimers are in GDP-bound state, owing to GTPase activity of alpha-tubulin. The polypeptide is Tubulin beta-2 chain (TUBB2) (Daucus carota (Wild carrot)).